We begin with the raw amino-acid sequence, 291 residues long: ATP synthase gamma chain (291 aa).

Belongs to the ATPase gamma chain family. F-type ATPases have 2 components, CF(1) - the catalytic core - and CF(0) - the membrane proton channel. CF(1) has five subunits: alpha(3), beta(3), gamma(1), delta(1), epsilon(1). CF(0) has three main subunits: a, b and c.

The protein resides in the cell inner membrane. Functionally, produces ATP from ADP in the presence of a proton gradient across the membrane. The gamma chain is believed to be important in regulating ATPase activity and the flow of protons through the CF(0) complex. The protein is ATP synthase gamma chain of Burkholderia multivorans (strain ATCC 17616 / 249).